The sequence spans 164 residues: Urocortin-3 (164 aa).

An N-terminal signal peptide occupies residues 1–23; it reads MLMPTYFLLPLLLLLGGPRTSLS. Residues 24–121 constitute a propeptide that is removed on maturation; the sequence is HKFYNTGPVF…PDKPKSDRGT (98 aa). The tract at residues 58–120 is disordered; it reads SFGHLPTQDP…YPDKPKSDRG (63 aa). Positions 110–120 are enriched in basic and acidic residues; it reads LYPDKPKSDRG. Ile-160 is subject to Isoleucine amide.

The protein belongs to the sauvagine/corticotropin-releasing factor/urotensin I family. As to quaternary structure, binds with high affinity to CRF receptors 2-alpha and 2-beta. Expressed in some areas of the brain including the hypothalamus, amygdala, and brainstem, but is not evident in the cerebellum, pituitary, or cerebral cortex; it is also expressed peripherally in small intestine and skin.

The protein resides in the secreted. Its function is as follows. Suppresses food intake, delays gastric emptying and decreases heat-induced edema. Might represent an endogenous ligand for maintaining homeostasis after stress. In Mus musculus (Mouse), this protein is Urocortin-3 (Ucn3).